The chain runs to 693 residues: Elongation factor G 1 (693 aa).

Residues 4 to 281 (NKLRNIGISA…AVTRFLPSPH (278 aa)) enclose the tr-type G domain. GTP is bound by residues 13-20 (AHIDSGKT), 80-84 (DTPGH), and 134-137 (NKCD).

Belongs to the TRAFAC class translation factor GTPase superfamily. Classic translation factor GTPase family. EF-G/EF-2 subfamily.

It is found in the cytoplasm. Its function is as follows. Catalyzes the GTP-dependent ribosomal translocation step during translation elongation. During this step, the ribosome changes from the pre-translocational (PRE) to the post-translocational (POST) state as the newly formed A-site-bound peptidyl-tRNA and P-site-bound deacylated tRNA move to the P and E sites, respectively. Catalyzes the coordinated movement of the two tRNA molecules, the mRNA and conformational changes in the ribosome. The sequence is that of Elongation factor G 1 from Borrelia garinii subsp. bavariensis (strain ATCC BAA-2496 / DSM 23469 / PBi) (Borreliella bavariensis).